Here is a 192-residue protein sequence, read N- to C-terminus: Phosphoheptose isomerase (192 aa).

In terms of domain architecture, SIS spans 37–192; the sequence is LADSFKGGGK…IQLIEKEMVK (156 aa). 52 to 54 is a substrate binding site; the sequence is NGG. Residues His61 and Glu65 each coordinate Zn(2+). Substrate is bound by residues Glu65, 93-94, 119-121, Ser124, and Gln172; these read ND and STS. The Zn(2+) site is built by Gln172 and His180.

It belongs to the SIS family. GmhA subfamily. Homotetramer. Zn(2+) is required as a cofactor.

Its subcellular location is the cytoplasm. It catalyses the reaction 2 D-sedoheptulose 7-phosphate = D-glycero-alpha-D-manno-heptose 7-phosphate + D-glycero-beta-D-manno-heptose 7-phosphate. Its pathway is carbohydrate biosynthesis; D-glycero-D-manno-heptose 7-phosphate biosynthesis; D-glycero-alpha-D-manno-heptose 7-phosphate and D-glycero-beta-D-manno-heptose 7-phosphate from sedoheptulose 7-phosphate: step 1/1. Its function is as follows. Catalyzes the isomerization of sedoheptulose 7-phosphate in D-glycero-D-manno-heptose 7-phosphate. This is Phosphoheptose isomerase from Escherichia coli O7:K1 (strain IAI39 / ExPEC).